The chain runs to 267 residues: uncharacterized protein (267 aa).

Belongs to the lin-8 family.

This is an uncharacterized protein from Caenorhabditis elegans.